A 462-amino-acid chain; its full sequence is ATP synthase subunit beta (462 aa).

150 to 157 (GGAGVGKT) contacts ATP.

This sequence belongs to the ATPase alpha/beta chains family. As to quaternary structure, F-type ATPases have 2 components, CF(1) - the catalytic core - and CF(0) - the membrane proton channel. CF(1) has five subunits: alpha(3), beta(3), gamma(1), delta(1), epsilon(1). CF(0) has three main subunits: a(1), b(2) and c(9-12). The alpha and beta chains form an alternating ring which encloses part of the gamma chain. CF(1) is attached to CF(0) by a central stalk formed by the gamma and epsilon chains, while a peripheral stalk is formed by the delta and b chains.

It localises to the cell membrane. It catalyses the reaction ATP + H2O + 4 H(+)(in) = ADP + phosphate + 5 H(+)(out). Functionally, produces ATP from ADP in the presence of a proton gradient across the membrane. The catalytic sites are hosted primarily by the beta subunits. The sequence is that of ATP synthase subunit beta from Wigglesworthia glossinidia brevipalpis.